The primary structure comprises 146 residues: Hemoglobin subunit beta-S/F (146 aa).

Val1 is modified (N-acetylvaline). The Globin domain maps to 2–146; the sequence is HLTDGEKNAI…VANALSHKYH (145 aa). Position 44 is a phosphoserine (Ser44). Lys59 is subject to N6-acetyllysine. Residue His63 coordinates heme b. Lys82 bears the N6-acetyllysine mark. His92 contributes to the heme b binding site. Cys93 bears the S-nitrosocysteine mark. The residue at position 144 (Lys144) is an N6-acetyllysine.

This sequence belongs to the globin family. As to quaternary structure, heterotetramer of two alpha chains and two beta chains. As to expression, red blood cells.

In terms of biological role, involved in oxygen transport from the lung to the various peripheral tissues. This chain is Hemoglobin subunit beta-S/F, found in Urocitellus townsendii (Townsend's ground squirrel).